Reading from the N-terminus, the 289-residue chain is ATP synthase gamma chain (289 aa).

It belongs to the ATPase gamma chain family. As to quaternary structure, F-type ATPases have 2 components, CF(1) - the catalytic core - and CF(0) - the membrane proton channel. CF(1) has five subunits: alpha(3), beta(3), gamma(1), delta(1), epsilon(1). CF(0) has three main subunits: a, b and c.

It localises to the cell inner membrane. Functionally, produces ATP from ADP in the presence of a proton gradient across the membrane. The gamma chain is believed to be important in regulating ATPase activity and the flow of protons through the CF(0) complex. The sequence is that of ATP synthase gamma chain from Herminiimonas arsenicoxydans.